A 359-amino-acid polypeptide reads, in one-letter code: S-geranylgeranyl-glutathione receptor P2RY8 (359 aa).

Residues 1–19 are Extracellular-facing; it reads MQVPNSTGPDNATLQMLRN. N-linked (GlcNAc...) asparagine glycosylation is found at asparagine 5 and asparagine 11. The helical transmembrane segment at 20–40 threads the bilayer; it reads PAIAVALPVVYSLVAAVSIPG. Over 41–57 the chain is Cytoplasmic; the sequence is NLFSLWVLCRRMGPRSP. The helical transmembrane segment at 58–78 threads the bilayer; the sequence is SVIFMINLSVTDLMLASVLPF. Residues 79-88 are Extracellular-facing; it reads QIYYHCNRHH. A helical membrane pass occupies residues 89-109; sequence WVFGVLLCNVVTVAFYANMYS. Residues 110-138 lie on the Cytoplasmic side of the membrane; the sequence is SILTMTCISVERFLGVLYPLSSKRWRRRR. Residues 139 to 159 form a helical membrane-spanning segment; that stretch reads YAVAACAGTWLLLLTALSPLA. The Extracellular segment spans residues 160–187; it reads RTDLTYPVHALGIITCFDVLKWTMLPSV. Residues 188 to 208 traverse the membrane as a helical segment; the sequence is AMWAVFLFTIFILLFLIPFVI. Residues 209 to 237 lie on the Cytoplasmic side of the membrane; that stretch reads TVACYTATILKLLRTEEAHGREQRRRAVG. Residues 238 to 258 traverse the membrane as a helical segment; that stretch reads LAAVVLLAFVTCFAPNNFVLL. The Extracellular segment spans residues 259 to 275; the sequence is AHIVSRLFYGKSYYHVY. A helical membrane pass occupies residues 276–296; that stretch reads KLTLCLSCLNNCLDPFVYYFA. The Cytoplasmic portion of the chain corresponds to 297-359; that stretch reads SREFQLRLRE…PGLQRQESVF (63 aa). The interval 329-359 is disordered; it reads RTTSVRSEAGAHPEGMEGATRPGLQRQESVF.

It belongs to the G-protein coupled receptor 1 family. Barely detectable in normal blood leukocytes. Weaker expression was seen in heart, kidney and lung. Not detected in brain. Expressed in B cells and follicular helper T cells in germinal centers (at protein level).

It localises to the cell membrane. Functionally, g protein-coupled receptor for S-geranylgeranyl-glutathione (GGG), an endogenous metabolite present in lymphoid tissues. Couples the binding of GGG to the activation of GNA13 and downstream repression of AKT activation in lymphocytes defining their positioning and growth within lymphoid organs. In lymphoid follicles, confines B cells and follicular helper T cells in germinal centers (GCs) in response to GGG local gradients established by GGT5 (via GGG catabolism) and ABCC1 (via extracellular transport) with lower concentrations of GGG found in the follicular dendritic cell network region around which germinal centers are formed. In the bone marrow, also in response to GGG gradients established by GGT5 and ABCC1, it restricts chemotactic transmigration of B cells, T cells and NK cells from blood vessels to the bone marrow parenchyma. Contributes to GNA13-dependent pathway that suppresses GC B cell growth. The protein is S-geranylgeranyl-glutathione receptor P2RY8 of Homo sapiens (Human).